Reading from the N-terminus, the 464-residue chain is Vacuolar protein sorting-associated protein atg6 (464 aa).

The interval 38–57 is disordered; that stretch reads SLTEMNESGESDDQMNSSSE. Positions 144–274 form a coiled coil; it reads VECAELLTEE…NSRKLEKLQK (131 aa). The interval 275-461 is BARA; that stretch reads MNVFSDIFYI…EAYVSSQDKQ (187 aa).

The protein belongs to the beclin family. Component of the autophagy-specific vps34 PI3-kinase complex I composed of vps15, atg6, pik3/vps34, atg14 and atg38. Also a component of the vps34 PI3-kinase complex II composed of atg6, pik3, vps15 and vps38.

Its subcellular location is the endosome membrane. It localises to the vacuole membrane. The protein localises to the preautophagosomal structure membrane. The protein resides in the cytoplasm. Functions as a part of the autophagy-specific VPS34 PI3-kinase complex I that plays a role in autophagosome assembly. This complex is essential to recruit the atg8-phosphatidylinositol conjugate and the atg12-atg5 conjugate to the pre-autophagosomal structure. Also functions as part of the VPS34 PI3-kinase complex II. The polypeptide is Vacuolar protein sorting-associated protein atg6 (atg6) (Schizosaccharomyces pombe (strain 972 / ATCC 24843) (Fission yeast)).